The chain runs to 361 residues: Outer membrane protein P2 (361 aa).

An N-terminal signal peptide occupies residues 1–20; the sequence is MKKTLAALIVGAFAASAANA.

Belongs to the Gram-negative porin family. Homotrimer.

It is found in the cell outer membrane. Functionally, forms pores that allow passive diffusion of small molecules across the outer membrane. This chain is Outer membrane protein P2 (ompP2), found in Haemophilus influenzae.